The sequence spans 133 residues: Ribonuclease P protein component (133 aa).

The protein belongs to the RnpA family. As to quaternary structure, consists of a catalytic RNA component (M1 or rnpB) and a protein subunit.

The enzyme catalyses Endonucleolytic cleavage of RNA, removing 5'-extranucleotides from tRNA precursor.. In terms of biological role, RNaseP catalyzes the removal of the 5'-leader sequence from pre-tRNA to produce the mature 5'-terminus. It can also cleave other RNA substrates such as 4.5S RNA. The protein component plays an auxiliary but essential role in vivo by binding to the 5'-leader sequence and broadening the substrate specificity of the ribozyme. This Corynebacterium glutamicum (strain ATCC 13032 / DSM 20300 / JCM 1318 / BCRC 11384 / CCUG 27702 / LMG 3730 / NBRC 12168 / NCIMB 10025 / NRRL B-2784 / 534) protein is Ribonuclease P protein component.